The following is a 72-amino-acid chain: Heat-stable enterotoxin A2 (72 aa).

A signal peptide spans 1–19; that stretch reads MKKSILFIFLSVLSFSPFA. Positions 20 to 53 are excised as a propeptide; sequence QDAKPAGSSKEKITLESKKCNIVKKNNESSPESM. 3 cysteine pairs are disulfide-bonded: C59–C64, C60–C68, and C63–C71.

It belongs to the heat-stable enterotoxin family.

It is found in the secreted. Functionally, toxin which activates the particulate form of guanylate cyclase and increases cyclic GMP levels within the host intestinal epithelial cells. The sequence is that of Heat-stable enterotoxin A2 (sta2) from Escherichia coli.